Here is a 336-residue protein sequence, read N- to C-terminus: Peroxidase 72 (336 aa).

The N-terminal stretch at Met-1–Cys-23 is a signal peptide. 4 disulfide bridges follow: Cys-42-Cys-122, Cys-75-Cys-80, Cys-128-Cys-329, and Cys-207-Cys-239. Catalysis depends on His-73, which acts as the Proton acceptor. Asp-74, Val-77, Gly-79, Asp-81, and Ser-83 together coordinate Ca(2+). Residue Pro-170 coordinates substrate. An N-linked (GlcNAc...) asparagine glycan is attached at Asn-173. His-200 serves as a coordination point for heme b. Thr-201 is a Ca(2+) binding site. N-linked (GlcNAc...) asparagine glycosylation is present at Asn-216. Residues Asp-252, Thr-255, and Asp-260 each contribute to the Ca(2+) site.

This sequence belongs to the peroxidase family. Classical plant (class III) peroxidase subfamily. Requires heme b as cofactor. Ca(2+) is required as a cofactor. Slightly expressed in roots.

It localises to the secreted. The catalysed reaction is 2 a phenolic donor + H2O2 = 2 a phenolic radical donor + 2 H2O. Its function is as follows. Removal of H(2)O(2), oxidation of toxic reductants, biosynthesis and degradation of lignin, suberization, auxin catabolism, response to environmental stresses such as wounding, pathogen attack and oxidative stress. These functions might be dependent on each isozyme/isoform in each plant tissue. The sequence is that of Peroxidase 72 (PER72) from Arabidopsis thaliana (Mouse-ear cress).